A 511-amino-acid chain; its full sequence is MFARAVSRKTMTGLLAGSRVLLASQFTMADRQVHTPLEPVQRQKYANNENLLKDHVEKIDPEVFNIMKNEKSRQRRGLELIASENFTSKAVMDALGSAMCNKYSEGYPGARYYGGNEFIDQMEILCQKRALEVFGLDPAKWGVNVQSLSGSPANFAVYTALVGANGRIMGLDLPDGGHLTHGFFTPARKVSATSEFFQSMPYKVDAQSGLIDYDKLEENAMLFRPKVLIAGVSCYARHLDYERFRKIATKAGAYLMSDMAHISGLVAAGLIPSPFEYSDVVTTTTHKSLRGPRGAMIFYRKGVRSVNAKGVETLYDLEEKINSAVFPGLQGGPHNHTIAGIAVALKQCLSEDFVQYGEQILKNAKTLAERLKKHGYSLATGGTDNHLLLVDLRPIGVEGARAEHILDLAHIACNKNTCPGDVSALRPGGIRLGTPALTSRGFKEQDFEKVGDFIHEGVQIAKKYNAEAGKTLKDFKAFTATNEQFKQEVAELAKRVEEFSGKFEIPGNDLF.

The residue at position 287 (K287) is an N6-(pyridoxal phosphate)lysine.

Belongs to the SHMT family. In terms of assembly, homotetramer. The cofactor is pyridoxal 5'-phosphate.

The enzyme catalyses (6R)-5,10-methylene-5,6,7,8-tetrahydrofolate + glycine + H2O = (6S)-5,6,7,8-tetrahydrofolate + L-serine. The protein operates within one-carbon metabolism; tetrahydrofolate interconversion. Its function is as follows. Interconversion of serine and glycine. The polypeptide is Serine hydroxymethyltransferase (Caenorhabditis briggsae).